The following is a 106-amino-acid chain: ATP-dependent Clp protease adapter protein ClpS (106 aa).

It belongs to the ClpS family. In terms of assembly, binds to the N-terminal domain of the chaperone ClpA.

In terms of biological role, involved in the modulation of the specificity of the ClpAP-mediated ATP-dependent protein degradation. In Vibrio cholerae serotype O1 (strain ATCC 39541 / Classical Ogawa 395 / O395), this protein is ATP-dependent Clp protease adapter protein ClpS.